A 602-amino-acid chain; its full sequence is Elongation factor 4 (602 aa).

Positions 7 to 189 (RNIRNFSIIA…AIVQRIPAPQ (183 aa)) constitute a tr-type G domain. GTP is bound by residues 19–24 (DHGKST) and 136–139 (NKID).

This sequence belongs to the TRAFAC class translation factor GTPase superfamily. Classic translation factor GTPase family. LepA subfamily.

It is found in the cell inner membrane. The enzyme catalyses GTP + H2O = GDP + phosphate + H(+). Its function is as follows. Required for accurate and efficient protein synthesis under certain stress conditions. May act as a fidelity factor of the translation reaction, by catalyzing a one-codon backward translocation of tRNAs on improperly translocated ribosomes. Back-translocation proceeds from a post-translocation (POST) complex to a pre-translocation (PRE) complex, thus giving elongation factor G a second chance to translocate the tRNAs correctly. Binds to ribosomes in a GTP-dependent manner. This chain is Elongation factor 4, found in Xylella fastidiosa (strain 9a5c).